The chain runs to 261 residues: Protein FAM78B (261 aa).

This sequence belongs to the FAM78 family.

This Homo sapiens (Human) protein is Protein FAM78B (FAM78B).